Reading from the N-terminus, the 272-residue chain is NH(3)-dependent NAD(+) synthetase (272 aa).

45–52 serves as a coordination point for ATP; it reads GISGGQDS. Asp51 is a binding site for Mg(2+). Deamido-NAD(+) is bound at residue Arg138. Thr158 is an ATP binding site. Residue Glu163 participates in Mg(2+) binding. Deamido-NAD(+) is bound by residues Lys171 and Asp178. ATP contacts are provided by Lys187 and Thr209. 258–259 is a binding site for deamido-NAD(+); sequence HK.

It belongs to the NAD synthetase family. As to quaternary structure, homodimer.

It carries out the reaction deamido-NAD(+) + NH4(+) + ATP = AMP + diphosphate + NAD(+) + H(+). It functions in the pathway cofactor biosynthesis; NAD(+) biosynthesis; NAD(+) from deamido-NAD(+) (ammonia route): step 1/1. Functionally, catalyzes the ATP-dependent amidation of deamido-NAD to form NAD. Uses ammonia as a nitrogen source. The chain is NH(3)-dependent NAD(+) synthetase from Bacillus cereus (strain 03BB102).